The primary structure comprises 99 residues: Large ribosomal subunit protein uL23 (99 aa).

Belongs to the universal ribosomal protein uL23 family. As to quaternary structure, part of the 50S ribosomal subunit. Contacts protein L29, and trigger factor when it is bound to the ribosome.

Functionally, one of the early assembly proteins it binds 23S rRNA. One of the proteins that surrounds the polypeptide exit tunnel on the outside of the ribosome. Forms the main docking site for trigger factor binding to the ribosome. The chain is Large ribosomal subunit protein uL23 from Lachnoclostridium phytofermentans (strain ATCC 700394 / DSM 18823 / ISDg) (Clostridium phytofermentans).